The following is a 188-amino-acid chain: Putative glutamine amidotransferase-like protein YvdE homolog (188 aa).

The 172-residue stretch at 17-188 (SPFWWNKVSY…IKDLGQGLQA (172 aa)) folds into the Glutamine amidotransferase type-1 domain.

In Lactococcus lactis subsp. cremoris (Streptococcus cremoris), this protein is Putative glutamine amidotransferase-like protein YvdE homolog.